Consider the following 29-residue polypeptide: Galanin (29 aa).

Alanine 29 is modified (alanine amide).

Belongs to the galanin family.

It is found in the secreted. Contracts smooth muscle of the gastrointestinal and genitourinary tract, regulates growth hormone release, modulates insulin release, and may be involved in the control of adrenal secretion. This is Galanin (GAL) from Alligator mississippiensis (American alligator).